A 513-amino-acid chain; its full sequence is Serine/threonine-protein kinase UL13 homolog (513 aa).

The interval 1 to 27 (MDTESKNKKTTNGGENSNCSHSTRTPD) is disordered. Over residues 10-23 (TTNGGENSNCSHST) the composition is skewed to polar residues. The Protein kinase domain occupies 145–487 (KEMPIYAGSG…FDSLNIFPYL (343 aa)). ATP-binding positions include 151–159 (AGSGSYGVV) and lysine 170. Aspartate 268 serves as the catalytic Proton acceptor.

The protein belongs to the protein kinase superfamily. Ser/Thr protein kinase family. Autophosphorylated.

It is found in the virion tegument. Its subcellular location is the host nucleus. It carries out the reaction L-seryl-[protein] + ATP = O-phospho-L-seryl-[protein] + ADP + H(+). The catalysed reaction is L-threonyl-[protein] + ATP = O-phospho-L-threonyl-[protein] + ADP + H(+). Its function is as follows. Multifunctional serine/threonine kinase that plays a role in several processes including egress of virus particles from the nucleus, modulation of the actin cytoskeleton and regulation of viral and cellular gene expression. This is Serine/threonine-protein kinase UL13 homolog (MDV025) from Gallid herpesvirus 2 (strain Chicken/Md5/ATCC VR-987) (GaHV-2).